Reading from the N-terminus, the 123-residue chain is Small ribosomal subunit protein uS13 (123 aa).

The tract at residues 93 to 123 (RRNLPVRGQKTKTNARTRKGPKRAIGGKKKK) is disordered.

The protein belongs to the universal ribosomal protein uS13 family. Part of the 30S ribosomal subunit. Forms a loose heterodimer with protein S19. Forms two bridges to the 50S subunit in the 70S ribosome.

In terms of biological role, located at the top of the head of the 30S subunit, it contacts several helices of the 16S rRNA. In the 70S ribosome it contacts the 23S rRNA (bridge B1a) and protein L5 of the 50S subunit (bridge B1b), connecting the 2 subunits; these bridges are implicated in subunit movement. Contacts the tRNAs in the A and P-sites. The sequence is that of Small ribosomal subunit protein uS13 from Clostridium botulinum (strain Kyoto / Type A2).